The primary structure comprises 330 residues: UPF0324 membrane protein BT_4609 (330 aa).

The next 10 helical transmembrane spans lie at isoleucine 16–isoleucine 33, alanine 38–glycine 60, tyrosine 73–glycine 95, methionine 99–isoleucine 116, serine 128–leucine 150, alanine 160–leucine 182, phenylalanine 189–glycine 211, isoleucine 221–phenylalanine 240, isoleucine 247–glycine 269, and threonine 284–valine 306.

It belongs to the UPF0324 family.

The protein resides in the cell membrane. In Bacteroides thetaiotaomicron (strain ATCC 29148 / DSM 2079 / JCM 5827 / CCUG 10774 / NCTC 10582 / VPI-5482 / E50), this protein is UPF0324 membrane protein BT_4609.